The chain runs to 932 residues: Alanine--tRNA ligase (932 aa).

Positions 623, 627, 726, and 730 each coordinate Zn(2+). Residues 893–916 (RVGGGGGGPPDFAQGGGPDVDSLD) are disordered. The span at 894–910 (VGGGGGGPPDFAQGGGP) shows a compositional bias: gly residues.

This sequence belongs to the class-II aminoacyl-tRNA synthetase family. Zn(2+) serves as cofactor.

It localises to the cytoplasm. The catalysed reaction is tRNA(Ala) + L-alanine + ATP = L-alanyl-tRNA(Ala) + AMP + diphosphate. Catalyzes the attachment of alanine to tRNA(Ala) in a two-step reaction: alanine is first activated by ATP to form Ala-AMP and then transferred to the acceptor end of tRNA(Ala). Also edits incorrectly charged Ser-tRNA(Ala) and Gly-tRNA(Ala) via its editing domain. The polypeptide is Alanine--tRNA ligase (Natronomonas pharaonis (strain ATCC 35678 / DSM 2160 / CIP 103997 / JCM 8858 / NBRC 14720 / NCIMB 2260 / Gabara) (Halobacterium pharaonis)).